The sequence spans 394 residues: Probable purine permease 23 (394 aa).

A compositionally biased stretch (basic and acidic residues) spans 1 to 20 (MEMTEASKHTTTHEESEHVQ). A disordered region spans residues 1 to 24 (MEMTEASKHTTTHEESEHVQNPEP). Serine 29 is modified (phosphoserine). The next 10 helical transmembrane spans lie at 43–63 (ISVLICLFLVLLGDSLVILLL), 85–105 (WMQALIQNAAFPILIPLFFIF), 124–144 (LILLYFSLGVLVAAHSKLYAL), 152–172 (GFFMLISGSQLIFTLIFTAII), 180–200 (WIIISIVLILVSYAFGGPVFS), 211–231 (GIQAWLTFAASVAFALSLCLV), 254–274 (VLEMQICVSSVASVVCLVGLF), 301–321 (VGLALSWQVWAVGLIGLVLYV), 328–348 (IVHMCASPLMAFIVVLAFDFI), and 352–372 (FSWPRIGALIGSVLALGSYFY).

The protein belongs to the purine permeases (TC 2.A.7.14) family.

It is found in the membrane. The polypeptide is Probable purine permease 23 (PUP23) (Arabidopsis thaliana (Mouse-ear cress)).